Reading from the N-terminus, the 476-residue chain is Eukaryotic translation initiation factor 3 subunit L (476 aa).

The PCI domain occupies 257–452 (DAIRMFSHIL…DLDYALENDL (196 aa)).

This sequence belongs to the eIF-3 subunit L family. Component of the eukaryotic translation initiation factor 3 (eIF-3) complex.

The protein localises to the cytoplasm. Its function is as follows. Component of the eukaryotic translation initiation factor 3 (eIF-3) complex, which is involved in protein synthesis of a specialized repertoire of mRNAs and, together with other initiation factors, stimulates binding of mRNA and methionyl-tRNAi to the 40S ribosome. The eIF-3 complex specifically targets and initiates translation of a subset of mRNAs involved in cell proliferation. This chain is Eukaryotic translation initiation factor 3 subunit L, found in Aspergillus fumigatus (strain CBS 144.89 / FGSC A1163 / CEA10) (Neosartorya fumigata).